The following is a 264-amino-acid chain: TLC domain-containing protein 2 (264 aa).

The next 6 membrane-spanning stretches (helical) occupy residues 3–23 (PTGL…HWGL), 42–62 (LCVS…GLSL), 77–97 (WALV…ADLL), 114–134 (VVVS…FSMV), 169–189 (SLAT…LWLF), and 199–219 (LVTL…ILGI). The TLC domain maps to 34 to 227 (RDRWQWWNLC…GIRILVNDVL (194 aa)). Residues 230–264 (RPHPPSPGHEKTRGTRTRRDNGPVTSNSSTLSLKD) form a disordered region. The span at 237 to 250 (GHEKTRGTRTRRDN) shows a compositional bias: basic and acidic residues. The segment covering 252-264 (PVTSNSSTLSLKD) has biased composition (polar residues).

Belongs to the TLCD family.

It localises to the cell membrane. In terms of biological role, regulates the composition and fluidity of the plasma membrane. Inhibits the incorporation of membrane-fluidizing phospholipids containing omega-3 long-chain polyunsaturated fatty acids (LCPUFA) and thereby promotes membrane rigidity. Does not appear to have any effect on LCPUFA synthesis. This is TLC domain-containing protein 2 (TLCD2) from Homo sapiens (Human).